Consider the following 167-residue polypeptide: Putative peroxiredoxin-A (167 aa).

The 164-residue stretch at 4 to 167 (IKRGDRFPTT…STAQKIIAKL (164 aa)) folds into the Thioredoxin domain. Catalysis depends on Cys53, which acts as the Cysteine sulfenic acid (-SOH) intermediate. The Microbody targeting signal motif lies at 165-167 (AKL).

Belongs to the peroxiredoxin family. Prx5 subfamily.

The protein resides in the peroxisome membrane. It catalyses the reaction a hydroperoxide + [thioredoxin]-dithiol = an alcohol + [thioredoxin]-disulfide + H2O. Functionally, thiol-specific peroxidase that catalyzes the reduction of hydrogen peroxide and organic hydroperoxides to water and alcohols, respectively. Plays a role in cell protection against oxidative stress by detoxifying peroxides and as sensor of hydrogen peroxide-mediated signaling events. The polypeptide is Putative peroxiredoxin-A (PMPA) (Candida boidinii (Yeast)).